Reading from the N-terminus, the 705-residue chain is Protein artemis (705 aa).

Thr-380 is modified (phosphothreonine). Ser-385 bears the Phosphoserine mark. Positions 451-462 are enriched in acidic residues; sequence EESNSDSGEELE. Disordered regions lie at residues 451-484, 535-569, and 638-675; these read EESN…NADP, PKLC…GWDS, and TLSG…AELP. Over residues 546–559 the composition is skewed to low complexity; it reads THISSQNSSQSTHI. The segment covering 560–569 has biased composition (polar residues); sequence TDQGSQGWDS. The segment covering 652–662 has biased composition (low complexity); that stretch reads SSTRADSQSSS. Ser-658 is subject to Phosphoserine; by ATM.

It belongs to the DNA repair metallo-beta-lactamase (DRMBL) family. As to quaternary structure, interacts with LIG4; the interaction is direct. Interacts with ATM. Interacts with BRCA1. Interacts with PRKDC. Interacts with TP53BP1. Also exhibits ATM- and phosphorylation-dependent interaction with the MRN complex, composed of MRE11, RAD50, and NBN. Phosphorylation on undefined residues by PRKDC may stimulate endonucleolytic activity on 5' and 3' hairpins and overhangs. PRKDC must remain present, even after phosphorylation, for efficient hairpin opening. Also phosphorylated by ATM in response to ionizing radiation (IR) and by ATR in response to ultraviolet (UV) radiation.

It is found in the nucleus. Required for V(D)J recombination, the process by which exons encoding the antigen-binding domains of immunoglobulins and T-cell receptor proteins are assembled from individual V, (D), and J gene segments. V(D)J recombination is initiated by the lymphoid specific RAG endonuclease complex, which generates site specific DNA double strand breaks (DSBs). These DSBs present two types of DNA end structures: hairpin sealed coding ends and phosphorylated blunt signal ends. These ends are independently repaired by the non homologous end joining (NHEJ) pathway to form coding and signal joints respectively. This protein likely exhibits single-strand specific 5'-3' exonuclease activity in isolation, and may acquire endonucleolytic activity on 5' and 3' hairpins and overhangs when in a complex with PRKDC. The latter activity may be required specifically for the resolution of closed hairpins prior to the formation of the coding joint. May also be required for the repair of complex DSBs induced by ionizing radiation, which require substantial end-processing prior to religation by NHEJ. In Mus musculus (Mouse), this protein is Protein artemis (Dclre1c).